The primary structure comprises 125 residues: Holo-[acyl-carrier-protein] synthase (125 aa).

Mg(2+) is bound by residues Asp-8 and Glu-60.

It belongs to the P-Pant transferase superfamily. AcpS family. It depends on Mg(2+) as a cofactor.

It localises to the cytoplasm. It catalyses the reaction apo-[ACP] + CoA = holo-[ACP] + adenosine 3',5'-bisphosphate + H(+). Its function is as follows. Transfers the 4'-phosphopantetheine moiety from coenzyme A to a Ser of acyl-carrier-protein. The polypeptide is Holo-[acyl-carrier-protein] synthase (Wolbachia sp. subsp. Brugia malayi (strain TRS)).